A 212-amino-acid polypeptide reads, in one-letter code: Glycerol-3-phosphate acyltransferase (212 aa).

Transmembrane regions (helical) follow at residues 3 to 23, 70 to 90, 110 to 130, 143 to 163, and 164 to 184; these read IIIMIIIAYLLGSIQTGLWIG, IPIILGITTVSPFFIGFFAII, AGVLLGFAPSFFLYLLVIFLL, ITVAVVGILSVLIFPLVGFIL, and TDYDWIFTTVVILMALTIIIR.

This sequence belongs to the PlsY family. In terms of assembly, probably interacts with PlsX.

Its subcellular location is the cell membrane. The enzyme catalyses an acyl phosphate + sn-glycerol 3-phosphate = a 1-acyl-sn-glycero-3-phosphate + phosphate. Its pathway is lipid metabolism; phospholipid metabolism. Catalyzes the transfer of an acyl group from acyl-phosphate (acyl-PO(4)) to glycerol-3-phosphate (G3P) to form lysophosphatidic acid (LPA). This enzyme utilizes acyl-phosphate as fatty acyl donor, but not acyl-CoA or acyl-ACP. This is Glycerol-3-phosphate acyltransferase from Streptococcus agalactiae serotype III (strain NEM316).